A 698-amino-acid polypeptide reads, in one-letter code: Polyribonucleotide nucleotidyltransferase (698 aa).

Residues Asp490 and Asp496 each coordinate Mg(2+). Residues 557–616 enclose the KH domain; the sequence is PKVVTMTIKPDKIRDVIGPGGKKINEIIDETGVKLDIEQDGTIFIGAVDQAMINRAREII. Residues 626–694 form the S1 motif domain; it reads GQTYQATVKR…KQGRVNASHR (69 aa).

This sequence belongs to the polyribonucleotide nucleotidyltransferase family. Requires Mg(2+) as cofactor.

The protein localises to the cytoplasm. It catalyses the reaction RNA(n+1) + phosphate = RNA(n) + a ribonucleoside 5'-diphosphate. In terms of biological role, involved in mRNA degradation. Catalyzes the phosphorolysis of single-stranded polyribonucleotides processively in the 3'- to 5'-direction. This chain is Polyribonucleotide nucleotidyltransferase, found in Staphylococcus aureus (strain Mu3 / ATCC 700698).